The chain runs to 129 residues: Large ribosomal subunit protein bL17 (129 aa).

This sequence belongs to the bacterial ribosomal protein bL17 family. Part of the 50S ribosomal subunit. Contacts protein L32.

The chain is Large ribosomal subunit protein bL17 from Actinobacillus succinogenes (strain ATCC 55618 / DSM 22257 / CCUG 43843 / 130Z).